The chain runs to 163 residues: Acetolactate synthase small subunit (163 aa).

Residues 4–79 (ILSVLLENES…VFKVVNLSEQ (76 aa)) form the ACT domain.

It belongs to the acetolactate synthase small subunit family. In terms of assembly, dimer of large and small chains.

It carries out the reaction 2 pyruvate + H(+) = (2S)-2-acetolactate + CO2. It functions in the pathway amino-acid biosynthesis; L-isoleucine biosynthesis; L-isoleucine from 2-oxobutanoate: step 1/4. The protein operates within amino-acid biosynthesis; L-valine biosynthesis; L-valine from pyruvate: step 1/4. The chain is Acetolactate synthase small subunit (ilvH) from Haemophilus influenzae (strain ATCC 51907 / DSM 11121 / KW20 / Rd).